The primary structure comprises 240 residues: Ribonuclease HII (240 aa).

The RNase H type-2 domain maps to 29 to 220 (EPIAGVDEAG…VRRAAGLEPL (192 aa)). Asp-35, Glu-36, and Asp-129 together coordinate a divalent metal cation.

The protein belongs to the RNase HII family. Mn(2+) serves as cofactor. Requires Mg(2+) as cofactor.

Its subcellular location is the cytoplasm. It catalyses the reaction Endonucleolytic cleavage to 5'-phosphomonoester.. Endonuclease that specifically degrades the RNA of RNA-DNA hybrids. The sequence is that of Ribonuclease HII from Nocardioides sp. (strain ATCC BAA-499 / JS614).